Here is a 307-residue protein sequence, read N- to C-terminus: Coproporphyrin III ferrochelatase (307 aa).

Residues Tyr12, Arg29, 45–46 (RY), Ser53, and Tyr124 each bind Fe-coproporphyrin III. 2 residues coordinate Fe(2+): His181 and Glu263.

It belongs to the ferrochelatase family.

The protein localises to the cytoplasm. It carries out the reaction Fe-coproporphyrin III + 2 H(+) = coproporphyrin III + Fe(2+). It participates in porphyrin-containing compound metabolism; protoheme biosynthesis. In terms of biological role, involved in coproporphyrin-dependent heme b biosynthesis. Catalyzes the insertion of ferrous iron into coproporphyrin III to form Fe-coproporphyrin III. This Staphylococcus epidermidis (strain ATCC 35984 / DSM 28319 / BCRC 17069 / CCUG 31568 / BM 3577 / RP62A) protein is Coproporphyrin III ferrochelatase.